Reading from the N-terminus, the 285-residue chain is Ribose-phosphate pyrophosphokinase (285 aa).

ATP-binding positions include 34-36 and 91-92; these read DGE and RQ. His124 and Asp162 together coordinate Mg(2+). Residue Lys185 is part of the active site. D-ribose 5-phosphate contacts are provided by residues Arg187, Asp211, and 215-219; that span reads STGGT.

This sequence belongs to the ribose-phosphate pyrophosphokinase family. Class III (archaeal) subfamily. Requires Mg(2+) as cofactor.

It localises to the cytoplasm. It catalyses the reaction D-ribose 5-phosphate + ATP = 5-phospho-alpha-D-ribose 1-diphosphate + AMP + H(+). Its pathway is metabolic intermediate biosynthesis; 5-phospho-alpha-D-ribose 1-diphosphate biosynthesis; 5-phospho-alpha-D-ribose 1-diphosphate from D-ribose 5-phosphate (route I): step 1/1. Involved in the biosynthesis of the central metabolite phospho-alpha-D-ribosyl-1-pyrophosphate (PRPP) via the transfer of pyrophosphoryl group from ATP to 1-hydroxyl of ribose-5-phosphate (Rib-5-P). This is Ribose-phosphate pyrophosphokinase from Pyrococcus abyssi (strain GE5 / Orsay).